The following is a 430-amino-acid chain: UDP-N-acetylglucosamine 1-carboxyvinyltransferase (430 aa).

22–23 serves as a coordination point for phosphoenolpyruvate; sequence KN. Position 102 (Arg102) interacts with UDP-N-acetyl-alpha-D-glucosamine. The Proton donor role is filled by Cys126. The residue at position 126 (Cys126) is a 2-(S-cysteinyl)pyruvic acid O-phosphothioketal. UDP-N-acetyl-alpha-D-glucosamine contacts are provided by residues 131 to 135, 172 to 175, Asp317, and Ile339; these read RPVDL and KVSV.

This sequence belongs to the EPSP synthase family. MurA subfamily.

It localises to the cytoplasm. It carries out the reaction phosphoenolpyruvate + UDP-N-acetyl-alpha-D-glucosamine = UDP-N-acetyl-3-O-(1-carboxyvinyl)-alpha-D-glucosamine + phosphate. It participates in cell wall biogenesis; peptidoglycan biosynthesis. In terms of biological role, cell wall formation. Adds enolpyruvyl to UDP-N-acetylglucosamine. The chain is UDP-N-acetylglucosamine 1-carboxyvinyltransferase from Allorhizobium ampelinum (strain ATCC BAA-846 / DSM 112012 / S4) (Agrobacterium vitis (strain S4)).